The following is a 1323-amino-acid chain: MEFPTQPKLVDGKSIIYPPGVKEITDKISNDEVVKRLKMVVKTYMDMDQDSEEEKQQYLPLALHLSSEFFLRNPNKDVRLLVACCLADIFRIYAPEAPYTSHDKLKEIFLFITRQLKGLEDTKSPQFNRYFYLLENLAWVKSYNICFELEDCNEIFIQLFKTLFSVINNSHNQKVQMHMLDLMSSITMEGDGVTQEQLDSILINLISAHKNLNKQAFDLAKVLLKRTAQTIEPCIANFFNQVLVLGKSSVSDLSEHVFDLIQELFAIDPHLLLSVMPQLEFKLKSNDGEERLAVVRLLAKLFGSKDSDLATQNRPLWQCFLGRFNDIHVPVRLESVKFASHCLMNHPDLAKDLTEFLKVRSHDPEEAIRHDVIVTIITAAKKDLFLVNDQLLGFVRERTLDKRWRVRKEAMMGLAQLYKKYCLHGEGGKDAAEKVSWIKDKLLHIYYQNSIDDKLLVEKIFAQQLVPHNLETEERMKCLYYLYASLDPNAVKALNEMWKCQNMLRSHVRELLDLHKQPTSEANTTAMFAKLMTVAKNLPDPGKAQDFVKKFNQVLGEDEKLRSQLEVLISPSCSCKQADVCVRDIARKVANPKQPTNPFLEMVKFLLERIAPVHIDSEAISALVKLMNKSIEGTADDEEEGVSPDSAIRAGLELLKVLSFTHPTSFHSDETYESLLQCLRMEDDKVAEAAIQIFRNTGHRIETDLPQIRSALIPILHQKAKRGTPHQAKQAVHCIHSIFSNKEVQLAQIFEPLSRSLNADVPEQLVTPLVSLGHISMLAPDQFASPMKSVVANFIVKDLLMNDRSNGDKNGKLWCPDEEVSPEVLAKGQAIKLLVRWLLGMKNNQSKSANSTLRLLSAMLVSEGDLTEQKRISKSDMSRLRLAAGAAIMKLAQEPCYHEIITPEQFQLCALVINDECYQVRQIFAQKLHKALVKLQLPLEYMAIFALCAKDPVKERRAHARQCLLKNISIRREYIKQNPVSNEKLLSLLPEYVVPYMIHLLAHDPDFTKPQDIDQLRDIKECLWFMLEVLMTKNENNSHAFMKKLCENIKQTRDAQAPDDPKANEKLFTVCDVALCVVYNKSAPCHSESSKDPVLPLTFFTQPDKDFSSKSYITDEARNLLLTGKPKPMTVLGMVNKPLNATGRRPYSRSTGSEISNNVSINSESDASVANRQSSEVPEIGVSENDENPVRLISVPPAKTETVKNKEVNLDQTAPSNTGTERGKKRSAASAGAENIRKESEEKKADNISATPTPKPRRGRPPKSESQGSAAKNDETSKPSGRGRKRAAANQESSGAQEAANAKVPKQDSTAKKTAQRQIDLHR.

Residues 385–421 (FLVNDQLLGFVRERTLDKRWRVRKEAMMGLAQLYKKY) form an HEAT repeat. A disordered region spans residues 1139–1323 (LNATGRRPYS…TAQRQIDLHR (185 aa)). Over residues 1153 to 1165 (SEISNNVSINSES) the composition is skewed to low complexity. Polar residues-rich tracts occupy residues 1166 to 1176 (DASVANRQSSE) and 1210 to 1220 (LDQTAPSNTGT). The span at 1235–1246 (NIRKESEEKKAD) shows a compositional bias: basic and acidic residues.

In terms of assembly, interacts with the cohesin complex. Binds chromatin in a cohesin-dependent manner.

The protein localises to the nucleus. Its function is as follows. May regulate sister chromatid cohesion during mitosis and couple it to DNA replication. The chain is Sister chromatid cohesion protein PDS5 homolog A-A (pds5a-a) from Xenopus laevis (African clawed frog).